The chain runs to 423 residues: Voltage-dependent calcium channel gamma-8 subunit (423 aa).

The next 4 helical transmembrane spans lie at V19 to I39, S127 to A147, I157 to I177, and F207 to I227. Residues S251 and S254 each carry the phosphoserine modification. Residues R271 to I304 form a disordered region. A compositionally biased stretch (low complexity) spans S276–R287. A helical membrane pass occupies residues V318–G338. Disordered regions lie at residues G342–T363 and V378–V423. The segment covering P384 to P399 has biased composition (pro residues). Over residues A410–V423 the composition is skewed to polar residues.

Belongs to the PMP-22/EMP/MP20 family. CACNG subfamily. In terms of assembly, interacts with CACNA1C. Identified in a complex with the L-type calcium channel subunits CACNA1C, CACNA2D1 and either CACNB1 or CACNB2. Acts as an auxiliary subunit for AMPA-selective glutamate receptors (AMPARs). Found in a complex with GRIA1, GRIA2, GRIA3, GRIA4, CNIH2, CNIH3, CACNG2, CACNG3, CACNG4, CACNG5 and CACNG7. Interacts with CNIH2. Found in a complex with GRIA1, GRIA2, GRIA3, GRIA4, DLG4 and CNIH2. Post-translationally, palmitoylated. Probably palmitoylated by ZDHHC3 and ZDHHC7.

Its subcellular location is the cell membrane. It localises to the postsynaptic density membrane. Regulates the activity of L-type calcium channels that contain CACNA1C as pore-forming subunit. Regulates the trafficking and gating properties of AMPA-selective glutamate receptors (AMPARs). Promotes their targeting to the cell membrane and synapses and modulates their gating properties by slowing their rates of activation, deactivation and desensitization and by mediating their resensitization. Does not show subunit-specific AMPA receptor regulation and regulates all AMPAR subunits. Thought to stabilize the calcium channel in an inactivated (closed) state. The polypeptide is Voltage-dependent calcium channel gamma-8 subunit (Mus musculus (Mouse)).